The following is a 168-amino-acid chain: Transcriptional regulator MraZ (168 aa).

SpoVT-AbrB domains lie at 8–51 (EYNQ…GGDR) and 90–140 (ALNM…KADT).

It belongs to the MraZ family. In terms of assembly, forms oligomers.

Its subcellular location is the cytoplasm. The protein resides in the nucleoid. This Cereibacter sphaeroides (strain ATCC 17025 / ATH 2.4.3) (Rhodobacter sphaeroides) protein is Transcriptional regulator MraZ.